Reading from the N-terminus, the 966-residue chain is Catenin alpha-2 (966 aa).

Residues 924-940 show a composition bias toward basic and acidic residues; the sequence is PEKKPLVKREKPEEYQT. A disordered region spans residues 924–952; sequence PEKKPLVKREKPEEYQTRVRRGSQKKHIS. Positions 941 to 951 are enriched in basic residues; that stretch reads RVRRGSQKKHI.

This sequence belongs to the vinculin/alpha-catenin family.

The protein localises to the cell membrane. It is found in the cytoplasm. It localises to the cytoskeleton. Its subcellular location is the cell junction. The protein resides in the adherens junction. The protein localises to the cell projection. It is found in the axon. It localises to the nucleus. Its function is as follows. May function as a linker between cadherin adhesion receptors and the cytoskeleton to regulate cell-cell adhesion and differentiation in the nervous system. This Xenopus laevis (African clawed frog) protein is Catenin alpha-2 (ctnna2).